Reading from the N-terminus, the 305-residue chain is Virulence plasmid integrase pGP7-D (305 aa).

The 87-residue stretch at 13 to 99 folds into the Core-binding (CB) domain; the sequence is LTFGDASEIW…CYISFTKFLY (87 aa). Residues 127–305 enclose the Tyr recombinase domain; sequence IKTESISKQE…SPLVQTPPIL (179 aa). Catalysis depends on residues Lys-188 and Arg-257. The active-site O-(3'-phospho-DNA)-tyrosine intermediate is the Tyr-289.

This sequence belongs to the 'phage' integrase family.

In Chlamydia trachomatis serovar L2 (strain ATCC VR-902B / DSM 19102 / 434/Bu), this protein is Virulence plasmid integrase pGP7-D.